A 50-amino-acid polypeptide reads, in one-letter code: uncharacterized protein (50 aa).

This is an uncharacterized protein from Sulfolobus islandicus filamentous virus (isolate Iceland/Hveragerdi) (SIFV).